Here is a 319-residue protein sequence, read N- to C-terminus: Glutathione synthetase (319 aa).

Residues 127 to 311 (KIFVTEFADL…VASLLWDAIE (185 aa)) enclose the ATP-grasp domain. 153 to 209 (RNEMGDIILKPLYGNGGAGVFHSARDDRNFSSLLEMFGQMFREPYIAQEYLPDVRKG) is an ATP binding site. Glu-282 and Asn-284 together coordinate Mg(2+).

This sequence belongs to the prokaryotic GSH synthase family. Mg(2+) is required as a cofactor. It depends on Mn(2+) as a cofactor.

It catalyses the reaction gamma-L-glutamyl-L-cysteine + glycine + ATP = glutathione + ADP + phosphate + H(+). Its pathway is sulfur metabolism; glutathione biosynthesis; glutathione from L-cysteine and L-glutamate: step 2/2. In Agrobacterium fabrum (strain C58 / ATCC 33970) (Agrobacterium tumefaciens (strain C58)), this protein is Glutathione synthetase.